The sequence spans 158 residues: Replication and maintenance protein (158 aa).

This is Replication and maintenance protein (repL) from Staphylococcus aureus.